A 290-amino-acid polypeptide reads, in one-letter code: MSSHESPRLLFVHAHPDDETLTTGGTIAHYVARSAEVHVVTCTLGEEGEVIGERYAQLAVDHADQLGGYRIAELTAALQSLGLRGPRYLGGAGHWRDSGMAGTPSRGRQRWVDADLDEAVGALVAVIGEVRPHVVVTYDPNGGYGHPDHIQTHVVTTRAVAAAPEAVGWTVPKFYWTVTAISAMTAGLQALGDVPSEWIRVNAEDIPFGFGDDQIDAVVDVTAELPAKVGAMRAHATQITVAPDGRAFALSNNIALPVLGEEHYVLVSGEAGPRDSRGWETDLLAGLDLE.

Positions 15, 18, and 149 each coordinate Zn(2+).

It belongs to the MshB deacetylase family. Zn(2+) is required as a cofactor.

The enzyme catalyses 1D-myo-inositol 2-acetamido-2-deoxy-alpha-D-glucopyranoside + H2O = 1D-myo-inositol 2-amino-2-deoxy-alpha-D-glucopyranoside + acetate. Functionally, catalyzes the deacetylation of 1D-myo-inositol 2-acetamido-2-deoxy-alpha-D-glucopyranoside (GlcNAc-Ins) in the mycothiol biosynthesis pathway. The protein is 1D-myo-inositol 2-acetamido-2-deoxy-alpha-D-glucopyranoside deacetylase (mshB) of Mycolicibacterium smegmatis (strain ATCC 700084 / mc(2)155) (Mycobacterium smegmatis).